The chain runs to 433 residues: Histone acetyltransferase type B subunit 2 (433 aa).

WD repeat units lie at residues 134 to 174 (NHDG…NTPS), 187 to 227 (GQHK…KPNN), 237 to 277 (GHTA…SAPK), 282 to 322 (AHTG…VKLH), and 326 to 366 (SHTD…QEQT). The segment at 368–372 (DDAED) is interaction with the histone H4 N-terminus. One copy of the WD 6 repeat lies at 383–433 (GHTSRPTDLAWSPHMEWALTSAAEDNIVMVWRPSKAVIDTGNEELTPDDLE).

Belongs to the WD repeat RBAP46/RBAP48/MSI1 family. As to quaternary structure, component of the HAT-B complex composed of at least HAT1 and HAT2. The HAT-B complex binds to histone H4 tail.

The protein resides in the cytoplasm. The protein localises to the nucleus. In terms of biological role, regulatory subunit of the histone acetylase B (HAT-B) complex. The complex acetylates 'Lys-12' of histone H4 which is required for telomeric silencing. This is Histone acetyltransferase type B subunit 2 (HAT2) from Mycosarcoma maydis (Corn smut fungus).